The following is a 74-amino-acid chain: uncharacterized protein (74 aa).

This is an uncharacterized protein from Saccharolobus islandicus (Sulfolobus islandicus).